The primary structure comprises 1317 residues: Putative late blight resistance protein homolog R1B-14 (1317 aa).

Coiled coils occupy residues 419–442 (RYSDSLAFLKNQLQVIQTEFESLQ) and 535–556 (RMNEEIVGFKDVIENLRNRLLN). The NB-ARC domain occupies 521–823 (TVITHTSSQL…SESFIKSSEG (303 aa)). 568–575 (GMPGLGKT) is an ATP binding site. LRR repeat units follow at residues 944-968 (FKFLKVLDLEHQVVIDFIPTELFYL), 987-1015 (LWNLETLILKSTPVGRHNTLLLPSTIWDM), 1090-1114 (PIRLEILKLYRSKAFKTIPFCISAP), 1138-1161 (LKHLEVLKLCDLEFGDHREWKVSN), 1164-1186 (FPQLKILKLEYLSLMKWIVADDA), and 1187-1211 (FPNLEQLVLHGCQDLMEIPSCFMDI). In terms of domain architecture, HMA spans 1251-1317 (IKKMVLKFDI…VSKLRKRGML (67 aa)).

It belongs to the disease resistance NB-LRR family.

Its subcellular location is the cytoplasm. The protein resides in the membrane. In terms of biological role, confers resistance to late blight (Phytophthora infestans) races carrying the avirulence gene Avr1. Resistance proteins guard the plant against pathogens that contain an appropriate avirulence protein via an indirect interaction with this avirulence protein. That triggers a defense system including the hypersensitive response, which restricts the pathogen growth. The sequence is that of Putative late blight resistance protein homolog R1B-14 (R1B-14) from Solanum demissum (Wild potato).